The sequence spans 410 residues: Probable serine/threonine-protein kinase PBL8 (410 aa).

Over residues 1-10 the composition is skewed to basic and acidic residues; that stretch reads MGNCGTRDEA. The interval 1–45 is disordered; sequence MGNCGTRDEAAVFTPQAQAQQLQKKHSRSVSDLSDPSTPRFRDDS. Residue glycine 2 is the site of N-myristoyl glycine attachment. Cysteine 4 is lipidated: S-palmitoyl cysteine. Threonine 58 bears the Phosphothreonine mark. Positions 69-350 constitute a Protein kinase domain; sequence FRPDYILGEG…DVVETLEPLQ (282 aa). Residues 75–83 and lysine 104 contribute to the ATP site; that span reads LGEGGFGTV. Tyrosine 149 is modified (phosphotyrosine). Aspartate 199 functions as the Proton acceptor in the catalytic mechanism. Phosphoserine is present on residues serine 203 and serine 233. Residues threonine 234 and threonine 239 each carry the phosphothreonine modification. The residue at position 247 (tyrosine 247) is a Phosphotyrosine.

The protein belongs to the protein kinase superfamily. Ser/Thr protein kinase family. In terms of assembly, interacts with the Xanthomonas campestris effector XopAC/AvrAC.

The protein localises to the cell membrane. The enzyme catalyses L-seryl-[protein] + ATP = O-phospho-L-seryl-[protein] + ADP + H(+). The catalysed reaction is L-threonyl-[protein] + ATP = O-phospho-L-threonyl-[protein] + ADP + H(+). Functionally, may be involved in plant defense signaling. The chain is Probable serine/threonine-protein kinase PBL8 from Arabidopsis thaliana (Mouse-ear cress).